Reading from the N-terminus, the 147-residue chain is Large ribosomal subunit protein uL13 (147 aa).

The disordered stretch occupies residues 128-147; sequence PEHPHSAQQPVPYELKQVAQ.

The protein belongs to the universal ribosomal protein uL13 family. As to quaternary structure, part of the 50S ribosomal subunit.

Its function is as follows. This protein is one of the early assembly proteins of the 50S ribosomal subunit, although it is not seen to bind rRNA by itself. It is important during the early stages of 50S assembly. The sequence is that of Large ribosomal subunit protein uL13 from Mycobacterium bovis (strain BCG / Pasteur 1173P2).